A 741-amino-acid polypeptide reads, in one-letter code: NAD(P)H-quinone oxidoreductase subunit 5, chloroplastic (741 aa).

18 consecutive transmembrane segments (helical) span residues 9-29 (WIVP…SLFF), 40-60 (WALI…NLFL), 89-109 (IDPL…MVMI), 124-144 (FFAY…SPNL), 147-167 (IYIF…FWFT), 185-205 (GDFG…SFEF), 218-238 (IDGV…LGPV), 258-278 (TPIS…FLVA), 286-306 (ALPL…LLGA), 327-347 (LGYM…FHLI), 354-374 (ALLF…VGYC), 395-415 (GITF…ACFW), 427-447 (YSPI…FYMF), 550-570 (FPLV…VPFF), 601-621 (FFID…IACI), 651-671 (IIYN…IILI), 687-707 (WAID…GEGM), and 719-739 (IFFS…SFSF).

The protein belongs to the complex I subunit 5 family. In terms of assembly, NDH is composed of at least 16 different subunits, 5 of which are encoded in the nucleus.

It is found in the plastid. The protein resides in the chloroplast thylakoid membrane. The catalysed reaction is a plastoquinone + NADH + (n+1) H(+)(in) = a plastoquinol + NAD(+) + n H(+)(out). The enzyme catalyses a plastoquinone + NADPH + (n+1) H(+)(in) = a plastoquinol + NADP(+) + n H(+)(out). In terms of biological role, NDH shuttles electrons from NAD(P)H:plastoquinone, via FMN and iron-sulfur (Fe-S) centers, to quinones in the photosynthetic chain and possibly in a chloroplast respiratory chain. The immediate electron acceptor for the enzyme in this species is believed to be plastoquinone. Couples the redox reaction to proton translocation, and thus conserves the redox energy in a proton gradient. The chain is NAD(P)H-quinone oxidoreductase subunit 5, chloroplastic (ndhF) from Cryptomeria japonica (Japanese cedar).